A 382-amino-acid polypeptide reads, in one-letter code: 2-epi-valiolone synthase (382 aa).

NAD(+)-binding positions include Glu-92–Lys-95, Gly-124–Asp-128, Thr-148–Thr-149, Lys-161, Lys-170, and His-188–Thr-191. Glu-203, His-266, and His-283 together coordinate Zn(2+).

This sequence belongs to the sugar phosphate cyclases superfamily. EVS family. NAD(+) serves as cofactor. It depends on Co(2+) as a cofactor. Requires Zn(2+) as cofactor.

The enzyme catalyses D-sedoheptulose 7-phosphate = 2-epi-valiolone + phosphate. Functionally, catalyzes the conversion of sedoheptulose 7-phosphate to 2-epi-valiolone, which may serve as an alternative precursor for aminocyclitol biosynthesis. The polypeptide is 2-epi-valiolone synthase (Actinosynnema mirum (strain ATCC 29888 / DSM 43827 / JCM 3225 / NBRC 14064 / NCIMB 13271 / NRRL B-12336 / IMRU 3971 / 101)).